The primary structure comprises 426 residues: NADH-quinone oxidoreductase subunit D 1 (426 aa).

The interval 1 to 51 (MATEFTVPDSAARIATAQQAGGGTPVRSGPPDEGGEFSGDRMSLSMGPSHP) is disordered.

The protein belongs to the complex I 49 kDa subunit family. In terms of assembly, NDH-1 is composed of 14 different subunits. Subunits NuoB, C, D, E, F, and G constitute the peripheral sector of the complex.

The protein resides in the cell inner membrane. The catalysed reaction is a quinone + NADH + 5 H(+)(in) = a quinol + NAD(+) + 4 H(+)(out). NDH-1 shuttles electrons from NADH, via FMN and iron-sulfur (Fe-S) centers, to quinones in the respiratory chain. The immediate electron acceptor for the enzyme in this species is believed to be ubiquinone. Couples the redox reaction to proton translocation (for every two electrons transferred, four hydrogen ions are translocated across the cytoplasmic membrane), and thus conserves the redox energy in a proton gradient. The sequence is that of NADH-quinone oxidoreductase subunit D 1 from Opitutus terrae (strain DSM 11246 / JCM 15787 / PB90-1).